A 232-amino-acid polypeptide reads, in one-letter code: MTNADPHELQKFSDLAHRWWDPNAEFKPLHELNPIRLSWIDAHAHLTGKTVLDIGCGGGILSESMASLGAHVKGIDLSTQALGVADLHSLESGVTVDYEEIAAEALAAREPGTYDVVTCMEMLEHVPQPAAIVEACRTLVKPGGWVFFSTLNRNVKSYLFAVIGAEYIAQMLPKGTHDYARFIRPSELASFARATNLRTADIKGIVYNPLSKHFTLSADTSVNYMLACRRDA.

Residues R36, G55, D76, and M120 each contribute to the S-adenosyl-L-methionine site.

The protein belongs to the methyltransferase superfamily. UbiG/COQ3 family.

The enzyme catalyses a 3-demethylubiquinol + S-adenosyl-L-methionine = a ubiquinol + S-adenosyl-L-homocysteine + H(+). It catalyses the reaction a 3-(all-trans-polyprenyl)benzene-1,2-diol + S-adenosyl-L-methionine = a 2-methoxy-6-(all-trans-polyprenyl)phenol + S-adenosyl-L-homocysteine + H(+). It participates in cofactor biosynthesis; ubiquinone biosynthesis. Its function is as follows. O-methyltransferase that catalyzes the 2 O-methylation steps in the ubiquinone biosynthetic pathway. The sequence is that of Ubiquinone biosynthesis O-methyltransferase from Paraburkholderia xenovorans (strain LB400).